Reading from the N-terminus, the 145-residue chain is Transcription antitermination protein NusB (145 aa).

Belongs to the NusB family.

Its function is as follows. Involved in transcription antitermination. Required for transcription of ribosomal RNA (rRNA) genes. Binds specifically to the boxA antiterminator sequence of the ribosomal RNA (rrn) operons. The polypeptide is Transcription antitermination protein NusB (Psychromonas ingrahamii (strain DSM 17664 / CCUG 51855 / 37)).